Here is a 340-residue protein sequence, read N- to C-terminus: Predicted GPI-anchored protein 46 (340 aa).

A signal peptide spans 1–29; that stretch reads MKILLIYSMTPKLVIWFTLFVLCLQMGDT. Over residues 99 to 115 the composition is skewed to low complexity; it reads SETTTTTTQESETSIAT. 2 disordered regions span residues 99–154 and 181–212; these read SETT…SLSS and MSSS…IKNY. N-linked (GlcNAc...) asparagine glycosylation is present at Asn-127. Residues 182-191 show a composition bias toward low complexity; that stretch reads SSSSSSSSGS. The span at 192–202 shows a compositional bias: basic and acidic residues; the sequence is LRDKSKLKQEN. N-linked (GlcNAc...) asparagine glycosylation is present at Asn-270. The GPI-anchor amidated asparagine moiety is linked to residue Asn-314. Positions 315 to 340 are cleaved as a propeptide — removed in mature form; the sequence is SAPLLWIKISKPTVCLVIALTFLLLG.

The protein localises to the cell membrane. It is found in the secreted. The chain is Predicted GPI-anchored protein 46 (PGA46) from Candida albicans (strain SC5314 / ATCC MYA-2876) (Yeast).